The chain runs to 195 residues: Imidazoleglycerol-phosphate dehydratase (195 aa).

Belongs to the imidazoleglycerol-phosphate dehydratase family.

Its subcellular location is the cytoplasm. The enzyme catalyses D-erythro-1-(imidazol-4-yl)glycerol 3-phosphate = 3-(imidazol-4-yl)-2-oxopropyl phosphate + H2O. Its pathway is amino-acid biosynthesis; L-histidine biosynthesis; L-histidine from 5-phospho-alpha-D-ribose 1-diphosphate: step 6/9. The chain is Imidazoleglycerol-phosphate dehydratase from Clostridium botulinum (strain Alaska E43 / Type E3).